A 489-amino-acid chain; its full sequence is Endoglucanase 4 (489 aa).

Residues 1–25 (MAGKSFMTPAIMLAMLLLISPETYA) form the signal peptide. Asp-81 functions as the Nucleophile in the catalytic mechanism. His-409 is a catalytic residue. A glycan (N-linked (GlcNAc...) asparagine) is linked at Asn-453. Catalysis depends on residues Asp-460 and Glu-469.

It belongs to the glycosyl hydrolase 9 (cellulase E) family.

It localises to the secreted. It catalyses the reaction Endohydrolysis of (1-&gt;4)-beta-D-glucosidic linkages in cellulose, lichenin and cereal beta-D-glucans.. The protein is Endoglucanase 4 of Arabidopsis thaliana (Mouse-ear cress).